We begin with the raw amino-acid sequence, 152 residues long: UPF0225 protein YchJ (152 aa).

This sequence belongs to the UPF0225 family.

The sequence is that of UPF0225 protein YchJ from Salmonella gallinarum (strain 287/91 / NCTC 13346).